The chain runs to 158 residues: 2-C-methyl-D-erythritol 2,4-cyclodiphosphate synthase (158 aa).

The a divalent metal cation site is built by aspartate 9 and histidine 11. Residues 9–11 and 35–36 contribute to the 4-CDP-2-C-methyl-D-erythritol 2-phosphate site; these read DVH and HS. Histidine 43 serves as a coordination point for a divalent metal cation. 4-CDP-2-C-methyl-D-erythritol 2-phosphate-binding positions include 57–59, 62–66, 133–136, phenylalanine 140, and arginine 143; these read DLG, FPDTD, and TTTE.

The protein belongs to the IspF family. In terms of assembly, homotrimer. The cofactor is a divalent metal cation.

The enzyme catalyses 4-CDP-2-C-methyl-D-erythritol 2-phosphate = 2-C-methyl-D-erythritol 2,4-cyclic diphosphate + CMP. Its pathway is isoprenoid biosynthesis; isopentenyl diphosphate biosynthesis via DXP pathway; isopentenyl diphosphate from 1-deoxy-D-xylulose 5-phosphate: step 4/6. Functionally, involved in the biosynthesis of isopentenyl diphosphate (IPP) and dimethylallyl diphosphate (DMAPP), two major building blocks of isoprenoid compounds. Catalyzes the conversion of 4-diphosphocytidyl-2-C-methyl-D-erythritol 2-phosphate (CDP-ME2P) to 2-C-methyl-D-erythritol 2,4-cyclodiphosphate (ME-CPP) with a corresponding release of cytidine 5-monophosphate (CMP). This chain is 2-C-methyl-D-erythritol 2,4-cyclodiphosphate synthase, found in Desulfitobacterium hafniense (strain DSM 10664 / DCB-2).